Consider the following 134-residue polypeptide: ATP synthase epsilon chain (134 aa).

Belongs to the ATPase epsilon chain family. As to quaternary structure, F-type ATPases have 2 components, CF(1) - the catalytic core - and CF(0) - the membrane proton channel. CF(1) has five subunits: alpha(3), beta(3), gamma(1), delta(1), epsilon(1). CF(0) has three main subunits: a, b and c.

It is found in the cellular thylakoid membrane. Produces ATP from ADP in the presence of a proton gradient across the membrane. The protein is ATP synthase epsilon chain of Prochlorococcus marinus (strain AS9601).